Consider the following 430-residue polypeptide: Glutamate-1-semialdehyde 2,1-aminomutase (430 aa).

Lysine 269 is modified (N6-(pyridoxal phosphate)lysine).

Belongs to the class-III pyridoxal-phosphate-dependent aminotransferase family. HemL subfamily. As to quaternary structure, homodimer. Requires pyridoxal 5'-phosphate as cofactor.

Its subcellular location is the cytoplasm. The enzyme catalyses (S)-4-amino-5-oxopentanoate = 5-aminolevulinate. Its pathway is porphyrin-containing compound metabolism; protoporphyrin-IX biosynthesis; 5-aminolevulinate from L-glutamyl-tRNA(Glu): step 2/2. The protein is Glutamate-1-semialdehyde 2,1-aminomutase of Desulfitobacterium hafniense (strain DSM 10664 / DCB-2).